The sequence spans 352 residues: Peptide chain release factor 1 (352 aa).

Gln-229 bears the N5-methylglutamine mark.

Belongs to the prokaryotic/mitochondrial release factor family. Post-translationally, methylated by PrmC. Methylation increases the termination efficiency of RF1.

The protein resides in the cytoplasm. Functionally, peptide chain release factor 1 directs the termination of translation in response to the peptide chain termination codons UAG and UAA. In Acidiphilium cryptum (strain JF-5), this protein is Peptide chain release factor 1.